We begin with the raw amino-acid sequence, 273 residues long: Eukaryotic translation initiation factor 3 subunit G-2 (273 aa).

The segment at 165 to 193 is disordered; the sequence is KYVPPFMKDGGGGPGGKNWGRGRERDDSS. Residues 173–183 are compositionally biased toward gly residues; sequence DGGGGPGGKNW. The region spanning 193–271 is the RRM domain; sequence SAVRISNLSE…LILCVEWSKP (79 aa).

This sequence belongs to the eIF-3 subunit G family. In terms of assembly, component of the eukaryotic translation initiation factor 3 (eIF-3) complex. The eIF-3 complex interacts with pix.

The protein localises to the cytoplasm. Functionally, RNA-binding component of the eukaryotic translation initiation factor 3 (eIF-3) complex, which is involved in protein synthesis of a specialized repertoire of mRNAs and, together with other initiation factors, stimulates binding of mRNA and methionyl-tRNAi to the 40S ribosome. The eIF-3 complex specifically targets and initiates translation of a subset of mRNAs involved in cell proliferation. This subunit can bind 18S rRNA. This Drosophila yakuba (Fruit fly) protein is Eukaryotic translation initiation factor 3 subunit G-2.